An 81-amino-acid polypeptide reads, in one-letter code: Neuronatin (81 aa).

This sequence belongs to the neuronatin family.

Its function is as follows. May participate in the maintenance of segment identity in the hindbrain and pituitary development, and maturation or maintenance of the overall structure of the nervous system. May function as a regulatory subunit of ion channels. In Sus scrofa (Pig), this protein is Neuronatin (NNAT).